The sequence spans 816 residues: Phosphatidylinositol 4-kinase beta (816 aa).

Positions 1-30 are disordered; the sequence is MGDTVVEPTPLKPTSESTPGPAGSNGGSLL. Glycine 2 bears the N-acetylglycine mark. Residues 2–68 are interaction with ACBD3; it reads GDTVVEPTPL…VKLLHGGVAI (67 aa). Residues 52–242 form the PIK helical domain; it reads CQEVLEKVKL…GTKLRKLILS (191 aa). Residues 248–318 form a disordered region; that stretch reads AHRKRELPSL…TESIDNSFSS (71 aa). At serine 258 the chain carries Phosphoserine. Residue threonine 263 is modified to Phosphothreonine. A phosphoserine mark is found at serine 266, serine 275, serine 277, serine 284, and serine 294. Composition is skewed to polar residues over residues 278–297 and 306–318; these read DATASISLSSNLKRTASNPK and SSSTESIDNSFSS. Serine 428 carries the phosphoserine modification. At threonine 438 the chain carries Phosphothreonine. Serine 511 carries the post-translational modification Phosphoserine. A phosphothreonine mark is found at threonine 517 and threonine 519. The 267-residue stretch at 535-801 folds into the PI3K/PI4K catalytic domain; it reads EPWQEKVRRI…MVDGSMRSIT (267 aa). A G-loop region spans residues 541–547; that stretch reads VRRIREG. A catalytic loop region spans residues 668 to 676; it reads QVKDRHNGN. An activation loop region spans residues 687-711; sequence HIDFGFILSSSPRNLGFETSAFKLT.

It belongs to the PI3/PI4-kinase family. Type III PI4K subfamily. Interacts with ARF1 and ARF3 in the Golgi complex, but not with ARF4, ARF5 or ARF6. Interacts with NCS1/FREQ in a calcium-independent manner. Interacts with CALN1/CABP8 and CALN2/CABP7; in a calcium-dependent manner; this interaction competes with NCS1/FREQ binding. Interacts with ACBD3. Interacts with ARMH3, YWHAB, YWHAE, YWHAG, YWHAH, YWHAQ, YWHAZ and SFN. Interacts with GGA2 (via VHS domain); the interaction is important for PI4KB location at the Golgi apparatus membrane. Interacts with ATG9A. It depends on Mg(2+) as a cofactor. The cofactor is Mn(2+).

It is found in the endomembrane system. It localises to the mitochondrion outer membrane. The protein localises to the rough endoplasmic reticulum membrane. Its subcellular location is the golgi apparatus. The protein resides in the golgi apparatus membrane. It catalyses the reaction a 1,2-diacyl-sn-glycero-3-phospho-(1D-myo-inositol) + ATP = a 1,2-diacyl-sn-glycero-3-phospho-(1D-myo-inositol 4-phosphate) + ADP + H(+). Its activity is regulated as follows. Inhibited by wortmannin. Increased kinase activity upon interaction with NCS1/FREQ. In terms of biological role, phosphorylates phosphatidylinositol (PI) in the first committed step in the production of the second messenger inositol-1,4,5,-trisphosphate (PIP). May regulate Golgi disintegration/reorganization during mitosis, possibly via its phosphorylation. Involved in Golgi-to-plasma membrane trafficking. May play an important role in the inner ear development. The chain is Phosphatidylinositol 4-kinase beta (PI4KB) from Otolemur garnettii (Small-eared galago).